A 402-amino-acid chain; its full sequence is 5-methylphenazine-1-carboxylate 1-monooxygenase (402 aa).

FAD-binding positions include 14-15 (IG), 35-36 (ES), 43-45 (LGV), Arg-106, Val-132, Arg-191, and Asp-310. Residues 368–385 (REKEEWAAASRPKTEKSA) are compositionally biased toward basic and acidic residues. The segment at 368-402 (REKEEWAAASRPKTEKSAALEAITGSYRNQVERPR) is disordered.

Monomer in solution. Probably interacts transiently with PhzM. FAD is required as a cofactor.

It carries out the reaction 5-methyl-phenazine-1-carboxylate + NADH + O2 + 2 H(+) = pyocyanin + CO2 + NAD(+) + H2O. Its pathway is secondary metabolite biosynthesis; pyocyanine biosynthesis. Functionally, involved in the biosynthesis of pyocyanine, a blue-pigmented phenazine derivative, which plays a role in virulence. Catalyzes the oxidative decarboxylation of 5-methylphenazine-1-carboxylate (5-methyl-PCA) to pyocyanine. Can also act on phenazine-1-carboxylate (PCA), converting it into 1-hydroxyphenazine (1-HP). However, PCA is a poor substrate. This Pseudomonas aeruginosa (strain ATCC 15692 / DSM 22644 / CIP 104116 / JCM 14847 / LMG 12228 / 1C / PRS 101 / PAO1) protein is 5-methylphenazine-1-carboxylate 1-monooxygenase.